The sequence spans 389 residues: Phosphatidylglycerol--prolipoprotein diacylglyceryl transferase (389 aa).

4 helical membrane-spanning segments follow: residues 28-48 (IIVA…LIYF), 58-78 (FFIF…YFLI), 98-118 (LAIQ…FNVF), and 148-168 (ISVF…QAIG). An a 1,2-diacyl-sn-glycero-3-phospho-(1'-sn-glycerol)-binding site is contributed by R169. 3 helical membrane passes run 220-240 (IPLF…IYFV), 281-301 (IVFS…CQTL), and 309-329 (FWTY…TTLF).

It belongs to the Lgt family.

It localises to the cell membrane. It carries out the reaction L-cysteinyl-[prolipoprotein] + a 1,2-diacyl-sn-glycero-3-phospho-(1'-sn-glycerol) = an S-1,2-diacyl-sn-glyceryl-L-cysteinyl-[prolipoprotein] + sn-glycerol 1-phosphate + H(+). The protein operates within protein modification; lipoprotein biosynthesis (diacylglyceryl transfer). Its function is as follows. Catalyzes the transfer of the diacylglyceryl group from phosphatidylglycerol to the sulfhydryl group of the N-terminal cysteine of a prolipoprotein, the first step in the formation of mature lipoproteins. This chain is Phosphatidylglycerol--prolipoprotein diacylglyceryl transferase, found in Mycoplasma pneumoniae (strain ATCC 29342 / M129 / Subtype 1) (Mycoplasmoides pneumoniae).